The following is a 530-amino-acid chain: GMP synthase [glutamine-hydrolyzing] (530 aa).

The 202-residue stretch at 4-205 folds into the Glutamine amidotransferase type-1 domain; sequence RILILDYGSQ…VREICGCEGD (202 aa). Catalysis depends on cysteine 84, which acts as the Nucleophile. Residues histidine 179 and glutamate 181 contribute to the active site. The region spanning 206 to 398 is the GMPS ATP-PPase domain; the sequence is WNMPDYISEA…LGLPPQMVYR (193 aa). ATP is bound at residue 233–239; the sequence is SGGVDSS.

In terms of assembly, homodimer.

The enzyme catalyses XMP + L-glutamine + ATP + H2O = GMP + L-glutamate + AMP + diphosphate + 2 H(+). The protein operates within purine metabolism; GMP biosynthesis; GMP from XMP (L-Gln route): step 1/1. Functionally, catalyzes the synthesis of GMP from XMP. This is GMP synthase [glutamine-hydrolyzing] from Bordetella avium (strain 197N).